A 241-amino-acid chain; its full sequence is Nicotinamide riboside kinase (241 aa).

Residue 21 to 29 participates in ATP binding; that stretch reads GCSSSGKST. Positions 28 and 47 each coordinate Mg(2+). Asp47 (proton acceptor) is an active-site residue. Substrate is bound by residues 47–50, 67–68, and Asp68; these read DDFY and WD. ATP is bound at residue Arg163. Arg164 lines the substrate pocket. ATP is bound by residues Arg167, 167–169, and 213–215; these read RGG and DVQ. 169 to 170 is a substrate binding site; that stretch reads GY.

Belongs to the uridine kinase family. NRK subfamily.

The catalysed reaction is beta-nicotinamide D-riboside + ATP = beta-nicotinamide D-ribonucleotide + ADP + H(+). It catalyses the reaction beta-D-ribosylnicotinate + ATP = nicotinate beta-D-ribonucleotide + ADP + H(+). It participates in cofactor biosynthesis; NAD(+) biosynthesis. Catalyzes the phosphorylation of nicotinamide riboside (NR) and nicotinic acid riboside (NaR) to form nicotinamide mononucleotide (NMN) and nicotinic acid mononucleotide (NaMN). This chain is Nicotinamide riboside kinase (NRK1), found in Eremothecium gossypii (strain ATCC 10895 / CBS 109.51 / FGSC 9923 / NRRL Y-1056) (Yeast).